Reading from the N-terminus, the 407-residue chain is Argininosuccinate synthase (407 aa).

ATP contacts are provided by residues 16-24 (AYSGGLDTS) and A44. Residues Y96 and S101 each contribute to the L-citrulline site. G126 contacts ATP. 3 residues coordinate L-aspartate: T128, N132, and D133. Residue N132 coordinates L-citrulline. Residues R136, S185, S194, E270, and Y282 each coordinate L-citrulline.

It belongs to the argininosuccinate synthase family. Type 1 subfamily. In terms of assembly, homotetramer.

It localises to the cytoplasm. The enzyme catalyses L-citrulline + L-aspartate + ATP = 2-(N(omega)-L-arginino)succinate + AMP + diphosphate + H(+). It functions in the pathway amino-acid biosynthesis; L-arginine biosynthesis; L-arginine from L-ornithine and carbamoyl phosphate: step 2/3. The chain is Argininosuccinate synthase from Shewanella oneidensis (strain ATCC 700550 / JCM 31522 / CIP 106686 / LMG 19005 / NCIMB 14063 / MR-1).